The following is a 375-amino-acid chain: Carbamoyl phosphate synthase small chain (375 aa).

The CPSase stretch occupies residues 1-184 (MVSLYLENGL…LDYKPFDEKI (184 aa)). 3 residues coordinate L-glutamine: serine 44, glycine 240, and glycine 242. One can recognise a Glutamine amidotransferase type-1 domain in the interval 188-375 (IIAVLDFGAK…KEFVGLLEGF (188 aa)). Catalysis depends on cysteine 268, which acts as the Nucleophile. Leucine 269, glutamine 272, asparagine 310, and tyrosine 313 together coordinate L-glutamine. Catalysis depends on residues histidine 351 and glutamate 353.

It belongs to the CarA family. In terms of assembly, composed of two chains; the small (or glutamine) chain promotes the hydrolysis of glutamine to ammonia, which is used by the large (or ammonia) chain to synthesize carbamoyl phosphate. Tetramer of heterodimers (alpha,beta)4.

The enzyme catalyses hydrogencarbonate + L-glutamine + 2 ATP + H2O = carbamoyl phosphate + L-glutamate + 2 ADP + phosphate + 2 H(+). It carries out the reaction L-glutamine + H2O = L-glutamate + NH4(+). It functions in the pathway amino-acid biosynthesis; L-arginine biosynthesis; carbamoyl phosphate from bicarbonate: step 1/1. The protein operates within pyrimidine metabolism; UMP biosynthesis via de novo pathway; (S)-dihydroorotate from bicarbonate: step 1/3. Functionally, small subunit of the glutamine-dependent carbamoyl phosphate synthetase (CPSase). CPSase catalyzes the formation of carbamoyl phosphate from the ammonia moiety of glutamine, carbonate, and phosphate donated by ATP, constituting the first step of 2 biosynthetic pathways, one leading to arginine and/or urea and the other to pyrimidine nucleotides. The small subunit (glutamine amidotransferase) binds and cleaves glutamine to supply the large subunit with the substrate ammonia. The protein is Carbamoyl phosphate synthase small chain of Helicobacter pylori (strain J99 / ATCC 700824) (Campylobacter pylori J99).